We begin with the raw amino-acid sequence, 504 residues long: Anaerobic nitric oxide reductase transcription regulator NorR (504 aa).

The residue at position 57 (D57) is a 4-aspartylphosphate. The 230-residue stretch at 187-416 (MIGLSPGMTQ…LEHAIHRAVV (230 aa)) folds into the Sigma-54 factor interaction domain. ATP is bound by residues 215–222 (GETGTGKE) and 278–287 (ADNGTLFLDE). Residues 479–498 (WAACARMLETDVANLHRLAK) constitute a DNA-binding region (H-T-H motif).

The protein operates within nitrogen metabolism; nitric oxide reduction. In terms of biological role, required for the expression of anaerobic nitric oxide (NO) reductase, acts as a transcriptional activator for at least the norVW operon. Activation also requires sigma-54. This Escherichia coli O127:H6 (strain E2348/69 / EPEC) protein is Anaerobic nitric oxide reductase transcription regulator NorR.